Reading from the N-terminus, the 514-residue chain is Histidine ammonia-lyase (514 aa).

The 5-imidazolinone (Cys-Gly) cross-link spans 143 to 145 (CSG). Serine 144 bears the 2,3-didehydroalanine (Ser) mark.

The protein belongs to the PAL/histidase family. Contains an active site 4-methylidene-imidazol-5-one (MIO), which is formed autocatalytically by cyclization and dehydration of residues Cys-Ser-Gly.

Its subcellular location is the cytoplasm. It catalyses the reaction L-histidine = trans-urocanate + NH4(+). Its pathway is amino-acid degradation; L-histidine degradation into L-glutamate; N-formimidoyl-L-glutamate from L-histidine: step 1/3. The chain is Histidine ammonia-lyase (hutH) from Streptomyces griseus.